Reading from the N-terminus, the 118-residue chain is Galanin peptides (118 aa).

Residues 1–19 form the signal peptide; the sequence is MHRCVGGVCVSLIVCAFLT. Positions 20–30 are excised as a propeptide; the sequence is ETLGMVIAAKE. Ala-61 is modified (alanine amide).

This sequence belongs to the galanin family. Strongly expressed in brain and stomach, moderately in the eye, and very weakly in heart, kidney and gills. Not detected in liver.

The protein localises to the secreted. In terms of biological role, endocrine hormone of the central and peripheral nervous systems that binds and activates the G protein-coupled receptors GALR1 (galr1a and galr1b) and GALR2 (galr2a and galr2b). This small neuropeptide may regulate diverse physiologic functions including contraction of smooth muscle of the gastrointestinal and genitourinary tract, growth hormone and insulin release and adrenal secretion. The polypeptide is Galanin peptides (Danio rerio (Zebrafish)).